A 359-amino-acid polypeptide reads, in one-letter code: Doublesex- and mab-3-related transcription factor B1 (359 aa).

Positions 7–54 (CSRCRNHGYLVPVKGHTGKCRWKQCICDKCYLITERQKIMAAQKVLRT) form a DNA-binding region, DM. Disordered stretches follow at residues 111 to 149 (PPQAPSPGPSTFQLGPSGRPGPSTFQPGPGAPGGLRDRS) and 262 to 359 (SGLV…EQSN). Pro residues-rich tracts occupy residues 277-299 (CSPPPPPPPPPPPPLPAPPPQPQ) and 315-325 (LPPPPPPPSPP). Positions 348–359 (EPSQDSPQEQSN) are enriched in polar residues.

The protein belongs to the DMRT family. In terms of tissue distribution, brain.

It localises to the nucleus. This is Doublesex- and mab-3-related transcription factor B1 (Dmrtb1) from Mus musculus (Mouse).